Reading from the N-terminus, the 731-residue chain is Actin filament-associated protein 1 (731 aa).

An N-acetylmethionine modification is found at Met1. The tract at residues 56–90 is disordered; it reads NNLPAPPQMPLPEIPQPWLPPDSGPPPLPTSSLPE. Positions 59–84 are enriched in pro residues; that stretch reads PAPPQMPLPEIPQPWLPPDSGPPPLP. The SH3-binding signature appears at 70 to 73; the sequence is PQPW. Residues 93-96 carry the SH2-binding 1 motif; the sequence is YEEA. The interval 118–139 is disordered; the sequence is SSSYESYDEEEEDGKGKKTRHQ. Positions 152–248 constitute a PH 1 domain; that stretch reads DAKICAFLLR…WLKVIKEAYS (97 aa). The interval 252–318 is disordered; the sequence is GPVDPECSPP…SKSEAKGTVS (67 aa). Basic and acidic residues predominate over residues 271–284; the sequence is AELEKKLSSERPSS. Ser283 and Ser284 each carry phosphoserine. The region spanning 348–442 is the PH 2 domain; that stretch reads DVPTCGYLNV…WIGILLAETG (95 aa). An SH2-binding 2 motif is present at residues 452-457; sequence YDYIDV. A disordered region spans residues 513 to 544; the sequence is KNKKPPASSNGVPVKGKAPSSQQKKVETAGGV. Ser549 is modified (phosphoserine). Residues 558 to 649 are a coiled coil; sequence KNRVEADAKR…VKESLKKALA (92 aa). An interaction with F-actin region spans residues 595–638; that stretch reads DLRAAIEVNAGRKTQAALEDKLKRLEEECKQREAERVSLELELT. Residues 658–731 form a disordered region; it reads IEPRSGTSSP…AKEWELKNGT (74 aa). Phosphoserine is present on residues Ser665, Ser666, and Ser669. Thr676 carries the post-translational modification Phosphothreonine. The span at 678–687 shows a compositional bias: polar residues; that stretch reads ENSPISSCDT. Ser680 and Ser688 each carry phosphoserine. Residues 721-731 show a composition bias toward basic and acidic residues; the sequence is KAKEWELKNGT.

As to quaternary structure, monomer and homomultimer. Interacts via its C-terminus with F-actin; probably involving AFAP1 multimers. Interacts with activated SRC SH3-SH2 domains. Interacts via its PH 1 domain with PRKCA, PRKCB and PRKCI. Post-translationally, phosphorylated on tyrosine residues by SRC.

Its subcellular location is the cytoplasm. The protein resides in the cytoskeleton. The protein localises to the stress fiber. Functionally, can cross-link actin filaments into both network and bundle structures. May modulate changes in actin filament integrity and induce lamellipodia formation. May function as an adapter molecule that links other proteins, such as SRC and PKC to the actin cytoskeleton. This Mus musculus (Mouse) protein is Actin filament-associated protein 1 (Afap1).